We begin with the raw amino-acid sequence, 615 residues long: Threonine--tRNA ligase (615 aa).

Positions 1–132 are editing domain; it reads MRILQLHCDR…PLAEGFKVIT (132 aa). The interval 196-495 is catalytic; that stretch reads PHVALMKRMG…SARGTKPELP (300 aa). Positions 288, 340, and 464 each coordinate Zn(2+).

The protein belongs to the class-II aminoacyl-tRNA synthetase family. In terms of assembly, homodimer. It depends on Zn(2+) as a cofactor.

It localises to the cytoplasm. The catalysed reaction is tRNA(Thr) + L-threonine + ATP = L-threonyl-tRNA(Thr) + AMP + diphosphate + H(+). Its function is as follows. Catalyzes the attachment of threonine to tRNA(Thr) in a two-step reaction: L-threonine is first activated by ATP to form Thr-AMP and then transferred to the acceptor end of tRNA(Thr). Also edits incorrectly charged L-seryl-tRNA(Thr). The chain is Threonine--tRNA ligase (thrS) from Cenarchaeum symbiosum (strain A).